The chain runs to 224 residues: Ornithine decarboxylase antizyme (224 aa).

The protein belongs to the ODC antizyme family. Interacts with ODC and thereby sterically blocks ODC homodimerization.

In terms of biological role, ornithine decarboxylase (ODC) antizyme protein that negatively regulates ODC activity and intracellular polyamine biosynthesis in response to increased intracellular polyamine levels. Binds to ODC monomers, inhibiting the assembly of the functional ODC homodimer, and targets the monomers for ubiquitin-independent proteolytic destruction by the 26S proteasome. In Schizosaccharomyces octosporus (Fission yeast), this protein is Ornithine decarboxylase antizyme (spa1).